A 628-amino-acid polypeptide reads, in one-letter code: DEAD-box ATP-dependent RNA helicase 9 (628 aa).

Residues 98 to 126 (LEVAKLGISPKIVSQLASRGITKLFPIQR) carry the Q motif motif. The region spanning 129 to 302 (LEPAMQGKDM…QKYLKNPVTI (174 aa)) is the Helicase ATP-binding domain. Residue 142–149 (AKTGTGKT) coordinates ATP. The DEAD box motif lies at 250-253 (DEAD). Positions 331 to 478 (VLGELIKEHA…KINVEGSDLM (148 aa)) constitute a Helicase C-terminal domain. Disordered stretches follow at residues 496–548 (GSYG…SGFG) and 571–628 (SGFG…FGSS). Residues 500–509 (RRGSFGSSSS) are compositionally biased toward low complexity. The span at 510-548 (RGGGFGDSGFGRSGGGFGRSGGGGFGRSSGGGFGDSGFG) shows a compositional bias: gly residues.

Belongs to the DEAD box helicase family. DDX21/DDX50 subfamily.

The catalysed reaction is ATP + H2O = ADP + phosphate + H(+). In Oryza sativa subsp. japonica (Rice), this protein is DEAD-box ATP-dependent RNA helicase 9.